We begin with the raw amino-acid sequence, 130 residues long: Small ribosomal subunit protein uS8 (130 aa).

The protein belongs to the universal ribosomal protein uS8 family. In terms of assembly, part of the 30S ribosomal subunit. Contacts proteins S5 and S12.

One of the primary rRNA binding proteins, it binds directly to 16S rRNA central domain where it helps coordinate assembly of the platform of the 30S subunit. This chain is Small ribosomal subunit protein uS8, found in Idiomarina loihiensis (strain ATCC BAA-735 / DSM 15497 / L2-TR).